The primary structure comprises 199 residues: Recombination protein RecR (199 aa).

A C4-type zinc finger spans residues 57 to 72 (CEKCNNFTEEVVCELC). The Toprim domain occupies 80–175 (ALLCVVEMPA…KITRIARGLP (96 aa)).

This sequence belongs to the RecR family.

Its function is as follows. May play a role in DNA repair. It seems to be involved in an RecBC-independent recombinational process of DNA repair. It may act with RecF and RecO. In Nitrosospira multiformis (strain ATCC 25196 / NCIMB 11849 / C 71), this protein is Recombination protein RecR.